Consider the following 134-residue polypeptide: Small ribosomal subunit protein uS11 (134 aa).

The protein belongs to the universal ribosomal protein uS11 family. As to quaternary structure, part of the 30S ribosomal subunit. Interacts with proteins S7 and S18. Binds to IF-3.

Its function is as follows. Located on the platform of the 30S subunit, it bridges several disparate RNA helices of the 16S rRNA. Forms part of the Shine-Dalgarno cleft in the 70S ribosome. The chain is Small ribosomal subunit protein uS11 from Parafrankia sp. (strain EAN1pec).